The following is a 300-amino-acid chain: Acetylglutamate kinase (300 aa).

Substrate-binding positions include 68–69, R90, and N195; that span reads GG.

This sequence belongs to the acetylglutamate kinase family. ArgB subfamily.

The protein localises to the cytoplasm. It catalyses the reaction N-acetyl-L-glutamate + ATP = N-acetyl-L-glutamyl 5-phosphate + ADP. It functions in the pathway amino-acid biosynthesis; L-arginine biosynthesis; N(2)-acetyl-L-ornithine from L-glutamate: step 2/4. Its function is as follows. Catalyzes the ATP-dependent phosphorylation of N-acetyl-L-glutamate. The polypeptide is Acetylglutamate kinase (Stutzerimonas stutzeri (strain A1501) (Pseudomonas stutzeri)).